We begin with the raw amino-acid sequence, 559 residues long: Myb/SANT-like DNA-binding domain-containing protein 2 (559 aa).

The segment at 1-62 is disordered; the sequence is MAAPCGSELP…GSAAGSGAAA (62 aa). Ser-13, Ser-24, Ser-27, Ser-32, and Ser-48 each carry phosphoserine. Low complexity predominate over residues 46–61; it reads GASPLGPGSAAGSGAA. Residues 103–173 enclose the Myb-like domain; sequence SWTPAETNAL…QCRERIKTLR (71 aa). Residues Lys-268 and Lys-343 each participate in a glycyl lysine isopeptide (Lys-Gly) (interchain with G-Cter in SUMO2) cross-link. Ser-436 carries the post-translational modification Phosphoserine.

The chain is Myb/SANT-like DNA-binding domain-containing protein 2 (Msantd2) from Mus musculus (Mouse).